Reading from the N-terminus, the 728-residue chain is Prolyl 3-hydroxylase 1 (728 aa).

Residues 1 to 14 form the signal peptide; it reads MVAVAAAAASRATA. 4 TPR repeats span residues 25–58, 135–168, 197–230, and 293–326; these read PDLL…RAAL, RSPY…NPEH, HMHE…YFVA, and PSHY…FPND. The N-linked (GlcNAc...) asparagine glycan is linked to N308. Residues 393–431 adopt a coiled-coil conformation; sequence KRLQEKQKSERETAVRISQEIGNLMKEIETLVEEKTKES. N-linked (GlcNAc...) asparagine glycans are attached at residues N450, N459, and N532. One can recognise a Fe2OG dioxygenase domain in the interval 556–670; that stretch reads SHLVCRTAIE…RCAIALWFTL (115 aa). Positions 579, 581, and 651 each coordinate Fe cation. R661 is a catalytic residue. The tract at residues 691-728 is disordered; it reads SPEEVDLPQEQPLPDQQGSPKPGEESLSDRESQPKDEL. A compositionally biased stretch (low complexity) spans 698–707; the sequence is PQEQPLPDQQ. The span at 712–728 shows a compositional bias: basic and acidic residues; sequence PGEESLSDRESQPKDEL. The Prevents secretion from ER signature appears at 725–728; sequence KDEL.

This sequence belongs to the leprecan family. It depends on Fe cation as a cofactor. L-ascorbate is required as a cofactor. Post-translationally, O-glycosylated; chondroitin sulfate. In terms of tissue distribution, expressed in basement membranes of cardiac muscle, skeletal muscle, central nervous system, intestinal tract, trachea, ear, skin, liver and kidney. In kidney, localizes to the glomerular basement membrane, mesangial matrix and Bowman's capsule of the nephron. In the renal parenchyma, expressed in the basement membranes of tubules and blood vessels. In the ear and trachea, localizes to the perimeter of resident chondrocytes in lacunae.

The protein localises to the endoplasmic reticulum. It is found in the secreted. The protein resides in the extracellular space. Its subcellular location is the extracellular matrix. It catalyses the reaction L-prolyl-[collagen] + 2-oxoglutarate + O2 = trans-3-hydroxy-L-prolyl-[collagen] + succinate + CO2. In terms of biological role, basement membrane-associated chondroitin sulfate proteoglycan (CSPG). Has prolyl 3-hydroxylase activity catalyzing the post-translational formation of 3-hydroxyproline in -Xaa-Pro-Gly- sequences in collagens, especially types IV and V. May be involved in the secretory pathway of cells. Has growth suppressive activity in fibroblasts. The protein is Prolyl 3-hydroxylase 1 of Rattus norvegicus (Rat).